We begin with the raw amino-acid sequence, 543 residues long: Zinc metalloproteinase (543 aa).

A signal peptide spans 1 to 24; sequence MHPNYYLSPLAVAIALGIASPVKA. Positions 25 to 207 are excised as a propeptide; sequence ADPIPLQKSS…PFVQWDDVKT (183 aa). H377 lines the Zn(2+) pocket. The active site involves E378. H381 and E401 together coordinate Zn(2+). The active-site Proton donor is the H463.

This sequence belongs to the peptidase M4 family. Zn(2+) serves as cofactor.

The protein resides in the secreted. Functionally, cleaves collagen, gelatin, casein, alpha-1-antitrypsin, and bovine insulin. May play a role in the pathogenesis of legionnaires disease. This is Zinc metalloproteinase from Legionella pneumophila.